We begin with the raw amino-acid sequence, 254 residues long: Zinc finger FYVE domain-containing protein 21 (254 aa).

The FYVE-type zinc-finger motif lies at 44–104 (DKECPRCMQC…QCAGCAPVSR (61 aa)). Residues Cys-50, Cys-53, Cys-66, Cys-69, Cys-74, Cys-77, Cys-96, and Cys-99 each contribute to the Zn(2+) site. The segment at 107 to 254 (ADFYDRQLKL…AKLLYESRDQ (148 aa)) is PH-like.

In terms of assembly, interacts with PTK2/FAK1.

The protein resides in the cell junction. The protein localises to the focal adhesion. It localises to the cytoplasmic vesicle. Its subcellular location is the endosome. Plays a role in cell adhesion, and thereby in cell motility which requires repeated formation and disassembly of focal adhesions. Regulates microtubule-induced PTK2/FAK1 dephosphorylation, an event important for focal adhesion disassembly, as well as integrin beta-1/ITGB1 cell surface expression. This is Zinc finger FYVE domain-containing protein 21 (ZFYVE21) from Bos taurus (Bovine).